A 62-amino-acid polypeptide reads, in one-letter code: Large ribosomal subunit protein bL33 (62 aa).

Belongs to the bacterial ribosomal protein bL33 family.

This chain is Large ribosomal subunit protein bL33, found in Acaryochloris marina (strain MBIC 11017).